The primary structure comprises 363 residues: Protein RecA (363 aa).

79 to 86 (GPESSGKT) is an ATP binding site.

Belongs to the RecA family.

The protein localises to the cytoplasm. Functionally, can catalyze the hydrolysis of ATP in the presence of single-stranded DNA, the ATP-dependent uptake of single-stranded DNA by duplex DNA, and the ATP-dependent hybridization of homologous single-stranded DNAs. It interacts with LexA causing its activation and leading to its autocatalytic cleavage. In Borrelia turicatae (strain 91E135), this protein is Protein RecA.